The chain runs to 335 residues: Mesoderm-specific transcript homolog protein (335 aa).

Transmembrane regions (helical) follow at residues 13–33 (WWVQVGLLAVPLLAAYLHIPP) and 63–83 (VGVVGSPEIVVLLHGFPTSSY). Residues 71–310 (IVVLLHGFPT…PRSTVSILDD (240 aa)) form the AB hydrolase-1 domain. An RVIALD motif is present at residues 98–103 (RVIALD). A glycan (N-linked (GlcNAc...) asparagine) is linked at Asn-163. The chain crosses the membrane as a helical span at residues 266–286 (VGALASVTIPIHFIYGPLDPV).

It belongs to the AB hydrolase superfamily. Highly expressed in hydatidiform moles, but barely expressed in dermoid cysts. Biallelic expression is detected in blood lymphocytes. Seems to imprinted in an isoform-specific manner rather than in a tissue-specific manner in lymphocytes. Isoform 1 is expressed only from the paternal allele. Isoform 2 is expressed from both the paternal allele and the maternal allele.

It is found in the endoplasmic reticulum membrane. The chain is Mesoderm-specific transcript homolog protein (MEST) from Homo sapiens (Human).